We begin with the raw amino-acid sequence, 390 residues long: Neuromedin-B receptor (390 aa).

The tract at residues Met1–Leu20 is disordered. The Extracellular segment spans residues Met1–Val41. N-linked (GlcNAc...) asparagine glycosylation is present at Asn8. The chain crosses the membrane as a helical span at residues Ile42–Val65. The Cytoplasmic segment spans residues Lys66–Asn79. A helical transmembrane segment spans residues Ile80–Val99. Topologically, residues Asp100–Lys117 are extracellular. Cys116 and Cys198 are joined by a disulfide. The chain crosses the membrane as a helical span at residues Leu118–Ala139. Residues Asp140 to Val156 lie on the Cytoplasmic side of the membrane. The chain crosses the membrane as a helical span at residues Val157–Pro177. At Glu178–Ile211 the chain is on the extracellular side. Asn192 is a glycosylation site (N-linked (GlcNAc...) asparagine). The helical transmembrane segment at His212–Ile235 threads the bilayer. Topologically, residues Ala236–Lys266 are cytoplasmic. The helical transmembrane segment at Ile267–Leu287 threads the bilayer. The Extracellular segment spans residues Tyr288 to Ser299. A helical transmembrane segment spans residues Leu300–Leu327. The Cytoplasmic segment spans residues Ser328–Leu390. Cys341 carries S-palmitoyl cysteine lipidation. Ser352 is modified (phosphoserine).

The protein belongs to the G-protein coupled receptor 1 family. Brain (olfactory bulb and central thalamic regions), and esophagus.

The protein resides in the cell membrane. In terms of biological role, receptor for neuromedin-B. Contributes to the maintenance of basal sigh rate through signaling in the pre-Botzinger complex, a cluster of several thousand neurons in the ventrolateral medulla responsible for inspiration during respiratory activity. Contributes to the induction of sneezing following exposure to chemical irritants or allergens which causes release of NMB by nasal sensory neurons and activation of NMBR-expressing neurons in the sneeze-evoking region of the brainstem. These in turn activate neurons of the caudal ventral respiratory group, giving rise to the sneezing response. Contributes to induction of acute itch, possibly through its activation on dorsal root ganglion neurons by the NMB peptide. Plays a role in the innate immune response to influenza A virus infection by enhancing interferon alpha expression and reducing expression of IL6. Plays a role in CSF1-induced proliferation of osteoclast precursors by contributing to the positive regulation of the expression of the CSF1 receptor CSF1R. The sequence is that of Neuromedin-B receptor (Nmbr) from Rattus norvegicus (Rat).